Here is a 122-residue protein sequence, read N- to C-terminus: Chorismate mutase AroH (122 aa).

Residues 2-120 (VRGIRGAITV…AVRLRPDLES (119 aa)) enclose the Chorismate mutase aroH-type domain. 3 residues coordinate prephenate: R6, R89, and Y107.

As to quaternary structure, homotrimer.

It is found in the cytoplasm. It carries out the reaction chorismate = prephenate. Its pathway is metabolic intermediate biosynthesis; prephenate biosynthesis; prephenate from chorismate: step 1/1. Inhibited by 40% with 500 uM tyrosine, and a tyrosine concentration as high as 5 mM reduced activity to 5%. In terms of biological role, catalyzes the Claisen rearrangement of chorismate to prephenate. Probably involved in the aromatic amino acid biosynthesis. The protein is Chorismate mutase AroH of Thermus thermophilus.